Reading from the N-terminus, the 437-residue chain is MSETHLSTKKFADFPLHKEVQQALNEVGFEFCTPIQALSLPILLAKKDIAGQAQTGTGKTLAFLVATFNHLLTEAAPTERKINQPRAIIMAPTRELAIQIAKDANLLAKHTGLKVGIVYGGEGYEAQRKVLDKGIDILIGTTGRIIDYVRQGVIDVSAIQAVVLDEADRMFDLGFIKDIRFLFRRMPDAKSRLNMLFSATLSMKVQELAYDHMNEPEKVEIAPNEKTSKNIKEEIFYPSMEEKMPLLLSLLEEDWPEKAIVFSNTKHSCEKVWSWLEGDGHRVGLLTGDVPQKKRLRILEQFTSGDIDVLVATDVAARGLHIADVSHVYNYDLPDDCEDYVHRIGRTGRAGQKGVSVSFACEEYALNLPAIESYIQHSIPVTSYDSEALLDDIPAPKRIHRKPSSHSRNSRDRSGSRPQGGHRGNAPRRHDKTRRHS.

A Q motif motif is present at residues 9 to 37 (KKFADFPLHKEVQQALNEVGFEFCTPIQA). Positions 40–219 (LPILLAKKDI…YDHMNEPEKV (180 aa)) constitute a Helicase ATP-binding domain. 53–60 (AQTGTGKT) contributes to the ATP binding site. A DEAD box motif is present at residues 165–168 (DEAD). Residues 243–390 (KMPLLLSLLE…VTSYDSEALL (148 aa)) enclose the Helicase C-terminal domain. Residues 394–437 (PAPKRIHRKPSSHSRNSRDRSGSRPQGGHRGNAPRRHDKTRRHS) form a disordered region. A compositionally biased stretch (basic residues) spans 425–437 (NAPRRHDKTRRHS).

The protein belongs to the DEAD box helicase family. RhlB subfamily. As to quaternary structure, component of the RNA degradosome, which is a multiprotein complex involved in RNA processing and mRNA degradation.

It localises to the cytoplasm. The catalysed reaction is ATP + H2O = ADP + phosphate + H(+). DEAD-box RNA helicase involved in RNA degradation. Has RNA-dependent ATPase activity and unwinds double-stranded RNA. The polypeptide is ATP-dependent RNA helicase RhlB (Shewanella piezotolerans (strain WP3 / JCM 13877)).